A 132-amino-acid chain; its full sequence is Small ribosomal subunit protein uS8 (132 aa).

Belongs to the universal ribosomal protein uS8 family. As to quaternary structure, part of the 30S ribosomal subunit. Contacts proteins S5 and S12.

One of the primary rRNA binding proteins, it binds directly to 16S rRNA central domain where it helps coordinate assembly of the platform of the 30S subunit. The chain is Small ribosomal subunit protein uS8 from Streptococcus thermophilus (strain CNRZ 1066).